A 76-amino-acid polypeptide reads, in one-letter code: Acyl carrier protein (76 aa).

Residues 2-76 enclose the Carrier domain; sequence KDNFTRLQSI…QDVLNYLERN (75 aa). Serine 37 is modified (O-(pantetheine 4'-phosphoryl)serine).

It belongs to the acyl carrier protein (ACP) family. In terms of processing, 4'-phosphopantetheine is transferred from CoA to a specific serine of apo-ACP by AcpS. This modification is essential for activity because fatty acids are bound in thioester linkage to the sulfhydryl of the prosthetic group.

It localises to the plastid. Its subcellular location is the chloroplast. It functions in the pathway lipid metabolism; fatty acid biosynthesis. Its function is as follows. Carrier of the growing fatty acid chain in fatty acid biosynthesis. This is Acyl carrier protein from Phaeodactylum tricornutum (strain CCAP 1055/1).